A 487-amino-acid chain; its full sequence is NAD-dependent histone deacetylase HST3 (487 aa).

The region spanning 15–336 is the Deacetylase sirtuin-type domain; it reads PADTSIKLHE…FLTQEQLDSE (322 aa). NAD(+)-binding positions include 40-59 and 129-132; these read GAGISCNAGIPDFRSSDGLY and QNID. The active-site Proton acceptor is the H167. Residues C175, C178, C200, and C203 each coordinate Zn(2+). Residues 261–263, 291–293, and C312 each bind NAD(+); these read GTS and NKT. The span at 397 to 406 shows a compositional bias: basic and acidic residues; the sequence is VESVSVKEEP. Positions 397 to 487 are disordered; the sequence is VESVSVKEEP…ARKGITLDQH (91 aa). Residues 415–425 are compositionally biased toward basic residues; sequence HKPKQATKLKR. The segment covering 448 to 459 has biased composition (polar residues); the sequence is DQLSSPASSING.

This sequence belongs to the sirtuin family. Class I subfamily. Requires Zn(2+) as cofactor.

It is found in the cytoplasm. The protein localises to the nucleus. The enzyme catalyses N(6)-acetyl-L-lysyl-[protein] + NAD(+) + H2O = 2''-O-acetyl-ADP-D-ribose + nicotinamide + L-lysyl-[protein]. In terms of biological role, NAD-dependent histone deacetylase, which could function in telomeric silencing, cell cycle progression and chromosome stability. The chain is NAD-dependent histone deacetylase HST3 (HST3) from Candida albicans (strain SC5314 / ATCC MYA-2876) (Yeast).